The primary structure comprises 141 residues: Auxin-responsive protein SAUR63 (141 aa).

It belongs to the ARG7 family. As to expression, expressed in hypocotyls, cotyledons, petioles, young rosette leaves, apical portion of inflorescence stems, stamen filaments and petals.

It localises to the cell membrane. In terms of biological role, may promote auxin-stimulated organ elongation, such as hypocotyls, stamen filaments and petals. The protein is Auxin-responsive protein SAUR63 of Arabidopsis thaliana (Mouse-ear cress).